The chain runs to 278 residues: 3-methyl-2-oxobutanoate hydroxymethyltransferase (278 aa).

2 residues coordinate Mg(2+): Asp-43 and Asp-82. 3-methyl-2-oxobutanoate-binding positions include 43–44 (DS), Asp-82, and Lys-112. Glu-114 lines the Mg(2+) pocket. Glu-181 (proton acceptor) is an active-site residue.

It belongs to the PanB family. In terms of assembly, homodecamer; pentamer of dimers. Requires Mg(2+) as cofactor.

The protein resides in the cytoplasm. The catalysed reaction is 3-methyl-2-oxobutanoate + (6R)-5,10-methylene-5,6,7,8-tetrahydrofolate + H2O = 2-dehydropantoate + (6S)-5,6,7,8-tetrahydrofolate. It participates in cofactor biosynthesis; (R)-pantothenate biosynthesis; (R)-pantoate from 3-methyl-2-oxobutanoate: step 1/2. Functionally, catalyzes the reversible reaction in which hydroxymethyl group from 5,10-methylenetetrahydrofolate is transferred onto alpha-ketoisovalerate to form ketopantoate. This chain is 3-methyl-2-oxobutanoate hydroxymethyltransferase, found in Desulfitobacterium hafniense (strain Y51).